We begin with the raw amino-acid sequence, 369 residues long: Cobalt-precorrin-5B C(1)-methyltransferase (369 aa).

It belongs to the CbiD family.

The enzyme catalyses Co-precorrin-5B + S-adenosyl-L-methionine = Co-precorrin-6A + S-adenosyl-L-homocysteine. It functions in the pathway cofactor biosynthesis; adenosylcobalamin biosynthesis; cob(II)yrinate a,c-diamide from sirohydrochlorin (anaerobic route): step 6/10. Catalyzes the methylation of C-1 in cobalt-precorrin-5B to form cobalt-precorrin-6A. In Brucella melitensis biotype 1 (strain ATCC 23456 / CCUG 17765 / NCTC 10094 / 16M), this protein is Cobalt-precorrin-5B C(1)-methyltransferase.